Consider the following 101-residue polypeptide: Interleukin-8 (101 aa).

An N-terminal signal peptide occupies residues 1–22 (MNSKLAVALLATFLLSLTLCEA). Residue arginine 27 is modified to Citrulline. 2 disulfides stabilise this stretch: cysteine 34/cysteine 61 and cysteine 36/cysteine 77.

Belongs to the intercrine alpha (chemokine CxC) family. In terms of assembly, homodimer. Interacts with TNFAIP6 (via Link domain); this interaction interferes with chemokine binding to glycosaminoglycans. Citrullination at Arg-27 prevents proteolysis, and dampens tissue inflammation, it also enhances leukocytosis, possibly through impaired chemokine clearance from the blood circulation.

Its subcellular location is the secreted. In terms of biological role, chemotactic factor that mediates inflammatory response by attracting neutrophils, basophils, and T-cells to clear pathogens and protect the host from infection. Also plays an important role in neutrophil activation. Released in response to an inflammatory stimulus, exerts its effect by binding to the G-protein-coupled receptors CXCR1 and CXCR2, primarily found in neutrophils, monocytes and endothelial cells. G-protein heterotrimer (alpha, beta, gamma subunits) constitutively binds to CXCR1/CXCR2 receptor and activation by IL8 leads to beta and gamma subunits release from Galpha (GNAI2 in neutrophils) and activation of several downstream signaling pathways including PI3K and MAPK pathways. The sequence is that of Interleukin-8 (CXCL8) from Oryctolagus cuniculus (Rabbit).